The following is an 88-amino-acid chain: Small ribosomal subunit protein uS17 (88 aa).

Belongs to the universal ribosomal protein uS17 family. As to quaternary structure, part of the 30S ribosomal subunit.

Functionally, one of the primary rRNA binding proteins, it binds specifically to the 5'-end of 16S ribosomal RNA. The sequence is that of Small ribosomal subunit protein uS17 from Vesicomyosocius okutanii subsp. Calyptogena okutanii (strain HA).